We begin with the raw amino-acid sequence, 218 residues long: Peptide deformylase (218 aa).

C130 and H172 together coordinate Fe cation. E173 is an active-site residue. H176 is a binding site for Fe cation.

It belongs to the polypeptide deformylase family. Fe(2+) is required as a cofactor.

It carries out the reaction N-terminal N-formyl-L-methionyl-[peptide] + H2O = N-terminal L-methionyl-[peptide] + formate. Removes the formyl group from the N-terminal Met of newly synthesized proteins. Requires at least a dipeptide for an efficient rate of reaction. N-terminal L-methionine is a prerequisite for activity but the enzyme has broad specificity at other positions. The sequence is that of Peptide deformylase from Bifidobacterium adolescentis (strain ATCC 15703 / DSM 20083 / NCTC 11814 / E194a).